We begin with the raw amino-acid sequence, 435 residues long: uncharacterized protein (435 aa).

WD repeat units follow at residues Asp-105–Ser-149, His-164–Gln-204, and Ala-207–Ile-247. Residue Ser-266 is modified to Phosphoserine. The stretch at Gly-313–Pro-353 is one WD 4 repeat. Positions Ser-352 to Ser-371 are disordered. The span at Ser-358–Ser-371 shows a compositional bias: low complexity. Position 388 is a phosphoserine (Ser-388).

The protein resides in the cytoplasm. The protein localises to the golgi apparatus. This is an uncharacterized protein from Schizosaccharomyces pombe (strain 972 / ATCC 24843) (Fission yeast).